The following is a 240-amino-acid chain: UDP-2,3-diacylglucosamine hydrolase (240 aa).

Residues Asp8, His10, Asp41, Asn79, and His114 each contribute to the Mn(2+) site. 79–80 (NR) is a binding site for substrate. Positions 122, 160, 164, 167, and 195 each coordinate substrate. 2 residues coordinate Mn(2+): His195 and His197.

It belongs to the LpxH family. Requires Mn(2+) as cofactor.

Its subcellular location is the cell inner membrane. The catalysed reaction is UDP-2-N,3-O-bis[(3R)-3-hydroxytetradecanoyl]-alpha-D-glucosamine + H2O = 2-N,3-O-bis[(3R)-3-hydroxytetradecanoyl]-alpha-D-glucosaminyl 1-phosphate + UMP + 2 H(+). It functions in the pathway glycolipid biosynthesis; lipid IV(A) biosynthesis; lipid IV(A) from (3R)-3-hydroxytetradecanoyl-[acyl-carrier-protein] and UDP-N-acetyl-alpha-D-glucosamine: step 4/6. Functionally, hydrolyzes the pyrophosphate bond of UDP-2,3-diacylglucosamine to yield 2,3-diacylglucosamine 1-phosphate (lipid X) and UMP by catalyzing the attack of water at the alpha-P atom. Involved in the biosynthesis of lipid A, a phosphorylated glycolipid that anchors the lipopolysaccharide to the outer membrane of the cell. The polypeptide is UDP-2,3-diacylglucosamine hydrolase (Escherichia coli O81 (strain ED1a)).